A 181-amino-acid polypeptide reads, in one-letter code: MEINNEKKKLSRQSSSFRLRSPSLNALRLHRVFDLFDKNNDGFITVEELSQALSRLGLDADFSDLKSTVDSFIKPDKTGLRFDDFAALHKTLDESFFGGEGSCCDGSPESDLEEAFNVFDEDGDGFISAVELQKVLKKLGLPEAGEIEQVEKMIVSVDSNHDGRVDFFEFKNMMQTVVVPS.

EF-hand domains are found at residues 24 to 59 (LNAL…LGLD), 107 to 142 (SPES…LGLP), and 145 to 180 (GEIE…VVVP). Ca(2+) contacts are provided by D37, N39, D41, E48, D120, D122, D124, E131, D158, N160, D162, R164, and E169.

In terms of tissue distribution, expressed specifically in roots.

Its function is as follows. Calcium-binding protein that may mediate calcium-dependent signal during plant defense response. The protein is Probable calcium-binding protein CML43 (CML43) of Arabidopsis thaliana (Mouse-ear cress).